The following is a 350-amino-acid chain: Zona pellucida-binding protein 1 (350 aa).

The N-terminal stretch at 1–38 is a signal peptide; it reads MEASAPDRARRGWRRARAAASPLSRAAVVLLLSALVLR. Asn-113, Asn-186, and Asn-339 each carry an N-linked (GlcNAc...) asparagine glycan.

The protein belongs to the zona pellucida-binding protein Sp38 family. In terms of processing, N-glycosylated. In terms of tissue distribution, expressed in testis. Detected in sperm cells.

It localises to the cytoplasmic vesicle. It is found in the secretory vesicle. The protein resides in the acrosome. Its subcellular location is the secreted. The protein localises to the acrosome membrane. In terms of biological role, plays a role in acrosome compaction and sperm morphogenesis. Is implicated in sperm-oocyte interaction during fertilization. The chain is Zona pellucida-binding protein 1 (ZPBP) from Sus scrofa (Pig).